A 49-amino-acid chain; its full sequence is Large ribosomal subunit protein bL33 (49 aa).

Belongs to the bacterial ribosomal protein bL33 family.

The polypeptide is Large ribosomal subunit protein bL33 (Streptococcus suis (strain 98HAH33)).